Reading from the N-terminus, the 364-residue chain is Peptide chain release factor 1 (364 aa).

Residue Q238 is modified to N5-methylglutamine. Residues 286-297 show a composition bias toward basic and acidic residues; the sequence is DEKRQAEEDSTR. A disordered region spans residues 286-315; that stretch reads DEKRQAEEDSTRRNLVGSGDRSERIRTYNY.

Belongs to the prokaryotic/mitochondrial release factor family. Post-translationally, methylated by PrmC. Methylation increases the termination efficiency of RF1.

Its subcellular location is the cytoplasm. In terms of biological role, peptide chain release factor 1 directs the termination of translation in response to the peptide chain termination codons UAG and UAA. This chain is Peptide chain release factor 1, found in Idiomarina loihiensis (strain ATCC BAA-735 / DSM 15497 / L2-TR).